Reading from the N-terminus, the 289-residue chain is Serine/threonine-protein phosphatase Pgam5, mitochondrial (289 aa).

The chain crosses the membrane as a helical span at residues 7-23 (LVCGAGAGLAAFYLSRL).

It belongs to the phosphoglycerate mutase family. BPG-dependent PGAM subfamily. Interacts with Pk92B/ASK1.

It is found in the mitochondrion outer membrane. It catalyses the reaction O-phospho-L-seryl-[protein] + H2O = L-seryl-[protein] + phosphate. It carries out the reaction O-phospho-L-threonyl-[protein] + H2O = L-threonyl-[protein] + phosphate. Its function is as follows. Displays phosphatase activity for serine/threonine residues, and dephosphorylates and activates Pk92B kinase. Has apparently no phosphoglycerate mutase activity. In Drosophila ananassae (Fruit fly), this protein is Serine/threonine-protein phosphatase Pgam5, mitochondrial.